A 541-amino-acid chain; its full sequence is Alpha-zingiberene synthase (541 aa).

Positions 296, 300, 437, 441, and 445 each coordinate Mg(2+). The short motif at 296–300 (DDIYD) is the DDXXD motif element.

It belongs to the terpene synthase family. Mg(2+) serves as cofactor. Requires Mn(2+) as cofactor.

It catalyses the reaction (2E,6E)-farnesyl diphosphate = alpha-zingiberene + diphosphate. Its pathway is secondary metabolite biosynthesis; terpenoid biosynthesis. Functionally, sesquiterpene synthase that catalyzes the formation of alpha-zingiberene and other sesquiterpenes from trans,trans-farnesyl diphosphate (FPP). May have an additional monoterpene synthase activity. This Ocimum basilicum (Sweet basil) protein is Alpha-zingiberene synthase (ZIS).